The sequence spans 322 residues: Ferredoxin--NADP reductase (322 aa).

Glutamate 37, glutamine 45, tyrosine 50, isoleucine 91, phenylalanine 128, and aspartate 290 together coordinate FAD.

This sequence belongs to the ferredoxin--NADP reductase type 2 family. In terms of assembly, homodimer. Requires FAD as cofactor.

It carries out the reaction 2 reduced [2Fe-2S]-[ferredoxin] + NADP(+) + H(+) = 2 oxidized [2Fe-2S]-[ferredoxin] + NADPH. This is Ferredoxin--NADP reductase from Malacoplasma penetrans (strain HF-2) (Mycoplasma penetrans).